Reading from the N-terminus, the 331-residue chain is UDP-N-acetylenolpyruvoylglucosamine reductase (331 aa).

Residues 54-221 (RVGGAAELYV…TQATFQLQPG (168 aa)) form the FAD-binding PCMH-type domain. The active site involves Arg-200. Ser-251 (proton donor) is an active-site residue. Glu-321 is a catalytic residue.

This sequence belongs to the MurB family. It depends on FAD as a cofactor.

The protein resides in the cytoplasm. It catalyses the reaction UDP-N-acetyl-alpha-D-muramate + NADP(+) = UDP-N-acetyl-3-O-(1-carboxyvinyl)-alpha-D-glucosamine + NADPH + H(+). It functions in the pathway cell wall biogenesis; peptidoglycan biosynthesis. Functionally, cell wall formation. The protein is UDP-N-acetylenolpyruvoylglucosamine reductase of Nostoc sp. (strain PCC 7120 / SAG 25.82 / UTEX 2576).